The sequence spans 324 residues: DNA-directed RNA polymerase subunit alpha (324 aa).

The tract at residues 1-228 is alpha N-terminal domain (alpha-NTD); it reads MIEFQKPTIR…EHFNLFTDLS (228 aa). Positions 245-324 are alpha C-terminal domain (alpha-CTD); it reads RNKLLDMTIE…STPKEEEEEK (80 aa).

This sequence belongs to the RNA polymerase alpha chain family. Homodimer. The RNAP catalytic core consists of 2 alpha, 1 beta, 1 beta' and 1 omega subunit. When a sigma factor is associated with the core the holoenzyme is formed, which can initiate transcription.

The enzyme catalyses RNA(n) + a ribonucleoside 5'-triphosphate = RNA(n+1) + diphosphate. Its function is as follows. DNA-dependent RNA polymerase catalyzes the transcription of DNA into RNA using the four ribonucleoside triphosphates as substrates. The polypeptide is DNA-directed RNA polymerase subunit alpha (Caldicellulosiruptor bescii (strain ATCC BAA-1888 / DSM 6725 / KCTC 15123 / Z-1320) (Anaerocellum thermophilum)).